The following is a 548-amino-acid chain: Chaperonin GroEL (548 aa).

Residues 30 to 33 (TLGP), lysine 51, 87 to 91 (DGTTT), glycine 415, and aspartate 495 each bind ATP.

Belongs to the chaperonin (HSP60) family. As to quaternary structure, forms a cylinder of 14 subunits composed of two heptameric rings stacked back-to-back. Interacts with the co-chaperonin GroES.

It localises to the cytoplasm. The enzyme catalyses ATP + H2O + a folded polypeptide = ADP + phosphate + an unfolded polypeptide.. Functionally, together with its co-chaperonin GroES, plays an essential role in assisting protein folding. The GroEL-GroES system forms a nano-cage that allows encapsulation of the non-native substrate proteins and provides a physical environment optimized to promote and accelerate protein folding. The protein is Chaperonin GroEL of Erwinia tasmaniensis (strain DSM 17950 / CFBP 7177 / CIP 109463 / NCPPB 4357 / Et1/99).